The following is a 71-amino-acid chain: Kunitz-type serine protease inhibitor HNTX-852 (71 aa).

An N-terminal signal peptide occupies residues Asp-1–Leu-22. Disulfide bonds link Cys-20/Cys-68 and Cys-43/Cys-64. The 46-residue stretch at Pro-23–Cys-68 folds into the BPTI/Kunitz inhibitor domain.

The protein belongs to the venom Kunitz-type family. 03 (sub-Kunitz) subfamily. In terms of tissue distribution, expressed by the venom gland.

The protein resides in the secreted. Its function is as follows. Serine protease inhibitor that inhibits trypsin at a molar ratio of 1:1. The sequence is that of Kunitz-type serine protease inhibitor HNTX-852 from Cyriopagopus hainanus (Chinese bird spider).